A 440-amino-acid polypeptide reads, in one-letter code: Trigger factor (440 aa).

Residues 162 to 247 (GDRVTFDFTG…LKKIEKFQLP (86 aa)) enclose the PPIase FKBP-type domain.

This sequence belongs to the FKBP-type PPIase family. Tig subfamily.

It is found in the cytoplasm. The catalysed reaction is [protein]-peptidylproline (omega=180) = [protein]-peptidylproline (omega=0). Its function is as follows. Involved in protein export. Acts as a chaperone by maintaining the newly synthesized protein in an open conformation. Functions as a peptidyl-prolyl cis-trans isomerase. The sequence is that of Trigger factor from Hamiltonella defensa subsp. Acyrthosiphon pisum (strain 5AT).